The primary structure comprises 172 residues: Crossover junction endodeoxyribonuclease RuvC (172 aa).

Residues Asp7, Glu68, and Asp141 contribute to the active site. 3 residues coordinate Mg(2+): Asp7, Glu68, and Asp141.

This sequence belongs to the RuvC family. As to quaternary structure, homodimer which binds Holliday junction (HJ) DNA. The HJ becomes 2-fold symmetrical on binding to RuvC with unstacked arms; it has a different conformation from HJ DNA in complex with RuvA. In the full resolvosome a probable DNA-RuvA(4)-RuvB(12)-RuvC(2) complex forms which resolves the HJ. Mg(2+) is required as a cofactor.

The protein resides in the cytoplasm. It catalyses the reaction Endonucleolytic cleavage at a junction such as a reciprocal single-stranded crossover between two homologous DNA duplexes (Holliday junction).. Functionally, the RuvA-RuvB-RuvC complex processes Holliday junction (HJ) DNA during genetic recombination and DNA repair. Endonuclease that resolves HJ intermediates. Cleaves cruciform DNA by making single-stranded nicks across the HJ at symmetrical positions within the homologous arms, yielding a 5'-phosphate and a 3'-hydroxyl group; requires a central core of homology in the junction. The consensus cleavage sequence is 5'-(A/T)TT(C/G)-3'. Cleavage occurs on the 3'-side of the TT dinucleotide at the point of strand exchange. HJ branch migration catalyzed by RuvA-RuvB allows RuvC to scan DNA until it finds its consensus sequence, where it cleaves and resolves the cruciform DNA. In Frankia casuarinae (strain DSM 45818 / CECT 9043 / HFP020203 / CcI3), this protein is Crossover junction endodeoxyribonuclease RuvC.